The chain runs to 290 residues: Picrinine-N-methytransferase (290 aa).

An SAM motif I region spans residues 71–80 (MLDVGCGIGG). A Vacuolar targeting signal motif is present at residues 133–139 (DGTFDLV). The segment at 134–142 (GTFDLVFTI) is SAM motif II. An SAM motif III region spans residues 161–170 (VAAPGAPIVI).

This sequence belongs to the class I-like SAM-binding methyltransferase superfamily. gTMT family. As to quaternary structure, homodimer. As to expression, accumulates in tissues actively synthesizing monoterpenoid indole alkaloids (MIAs) (at protein level). Mainly expressed in young leaves and, to a lower extent, in roots and stems.

It is found in the vacuole membrane. The enzyme catalyses picrinine + S-adenosyl-L-methionine = ervincine + S-adenosyl-L-homocysteine + H(+). It functions in the pathway alkaloid biosynthesis; vindoline biosynthesis. In terms of biological role, S-adenosyl-L-methionine-dependent N-methyltransferase involved in the biosynthesis of biologically active monoterpenoid indole alkaloids (MIAs) natural products including vindoline. Catalyzes the conversion of picrinine to N-methylpicrinine (ervincine). Also accepts, with low efficiency, 21-hydroxycyclolochnericine and norajmaline as substrates. This is Picrinine-N-methytransferase from Rauvolfia serpentina (Serpentine wood).